A 301-amino-acid polypeptide reads, in one-letter code: Nitric oxide synthase-interacting protein (301 aa).

Ser-36 carries the phosphoserine modification. The U-box-like stretch occupies residues 55-75; the sequence is DPVVTPDGYLYEREAILEYIL. Residues 78 to 101 carry the Nuclear localization signal motif; it reads KREIARQVKAYEKQRGARREEQKE. Residues 131–154 form a disordered region; it reads PKAATLPNTEGEQPGPSVGPVGKD.

This sequence belongs to the NOSIP family. Interacts with NOS1 and NOS3. Interacts with PP2A holoenzyme, containing PPP2CA, PPP2CB, PPP2R1A and PPP2R2A subunits.

Its subcellular location is the cytoplasm. The protein localises to the nucleus. The enzyme catalyses S-ubiquitinyl-[E2 ubiquitin-conjugating enzyme]-L-cysteine + [acceptor protein]-L-lysine = [E2 ubiquitin-conjugating enzyme]-L-cysteine + N(6)-ubiquitinyl-[acceptor protein]-L-lysine.. It participates in protein modification; protein ubiquitination. Its function is as follows. E3 ubiquitin-protein ligase that is essential for proper development of the forebrain, the eye and the face. Catalyzes monoubiquitination of serine/threonine-protein phosphatase 2A (PP2A) catalytic subunit PPP2CA/PPP2CB. Negatively regulates nitric oxide production by inducing NOS1 and NOS3 translocation to actin cytoskeleton and inhibiting their enzymatic activity. The chain is Nitric oxide synthase-interacting protein (Nosip) from Mus musculus (Mouse).